Consider the following 108-residue polypeptide: Large ribosomal subunit protein bL31B (108 aa).

The interval 85 to 108 (PKPETSVEEVLPKGKKKAPAKKKK) is disordered. Residues 97–108 (KGKKKAPAKKKK) are compositionally biased toward basic residues.

This sequence belongs to the bacterial ribosomal protein bL31 family. Type B subfamily. Part of the 50S ribosomal subunit.

In Chlamydia muridarum (strain MoPn / Nigg), this protein is Large ribosomal subunit protein bL31B.